Here is a 363-residue protein sequence, read N- to C-terminus: Molybdenum import ATP-binding protein ModC (363 aa).

An ABC transporter domain is found at 1-230 (MISARFSGRQ…PNLPLIHRPD (230 aa)). 31-38 (GPSGCGKT) provides a ligand contact to ATP. One can recognise a Mop domain in the interval 289–359 (DTTILNALPA…LKAMALSAPA (71 aa)).

It belongs to the ABC transporter superfamily. Molybdate importer (TC 3.A.1.8) family. As to quaternary structure, the complex is composed of two ATP-binding proteins (ModC), two transmembrane proteins (ModB) and a solute-binding protein (ModA).

Its subcellular location is the cell inner membrane. The catalysed reaction is molybdate(out) + ATP + H2O = molybdate(in) + ADP + phosphate + H(+). In terms of biological role, part of the ABC transporter complex ModABC involved in molybdenum import. Responsible for energy coupling to the transport system. The polypeptide is Molybdenum import ATP-binding protein ModC (Rhodobacter capsulatus (Rhodopseudomonas capsulata)).